Consider the following 44-residue polypeptide: Large ribosomal subunit protein bL34 (44 aa).

Belongs to the bacterial ribosomal protein bL34 family.

This chain is Large ribosomal subunit protein bL34, found in Ehrlichia ruminantium (strain Gardel).